The chain runs to 444 residues: Aspartate--tRNA(Asp/Asn) ligase (444 aa).

Glu-176 is an L-aspartate binding site. An aspartate region spans residues 198–201 (QLFK). Arg-220 is a binding site for L-aspartate. ATP-binding positions include 220–222 (RAE), 228–230 (RHL), and Glu-367. Positions 367 and 370 each coordinate Mg(2+). 2 residues coordinate L-aspartate: Ser-370 and Arg-374. 415–418 (GCER) provides a ligand contact to ATP.

This sequence belongs to the class-II aminoacyl-tRNA synthetase family. Type 2 subfamily. In terms of assembly, homodimer. Requires Mg(2+) as cofactor.

The protein resides in the cytoplasm. It carries out the reaction tRNA(Asx) + L-aspartate + ATP = L-aspartyl-tRNA(Asx) + AMP + diphosphate. Its function is as follows. Aspartyl-tRNA synthetase with relaxed tRNA specificity since it is able to aspartylate not only its cognate tRNA(Asp) but also tRNA(Asn). Reaction proceeds in two steps: L-aspartate is first activated by ATP to form Asp-AMP and then transferred to the acceptor end of tRNA(Asp/Asn). This is Aspartate--tRNA(Asp/Asn) ligase from Methanosarcina acetivorans (strain ATCC 35395 / DSM 2834 / JCM 12185 / C2A).